Consider the following 251-residue polypeptide: MNKHERLDEIAKLVNKKGTIRTNEIVEGLNVSDMTVRRDLIELENKGILTKIHGGARSNSTFQYKEISHKEKHTRQIAEKRYIARKAASLIEDGDTLFFGPGTTVELLAEEVNHHTLTIITNCLPVYKILLEKQTAHFRVYLIGGEMRHITEAFVGEMANAMLEKLRFSKMFFSSNAVNKGAVMTSTLDEAYTQQLALSNSIEKYLLIDHTKVGKEDFTSFCQLNELTAVVMDYEDEEKVETIKTYIEVVD.

The 56-residue stretch at Lys3–Ser58 folds into the HTH deoR-type domain. A DNA-binding region (H-T-H motif) is located at residues Ile20–Asp39.

Its function is as follows. Repressor of the lactose catabolism operon. Galactose-6-phosphate is the inducer. The protein is Lactose phosphotransferase system repressor (lacR) of Staphylococcus aureus (strain N315).